The following is a 548-amino-acid chain: Lysine--tRNA ligase (548 aa).

Residues 52 to 60 (PSGLPHIGT) carry the 'HIGH' region motif. The short motif at 300–304 (KISKS) is the 'KMSKS' region element. Lys303 provides a ligand contact to ATP.

Belongs to the class-I aminoacyl-tRNA synthetase family.

Its subcellular location is the cytoplasm. The catalysed reaction is tRNA(Lys) + L-lysine + ATP = L-lysyl-tRNA(Lys) + AMP + diphosphate. The polypeptide is Lysine--tRNA ligase (Mesorhizobium japonicum (strain LMG 29417 / CECT 9101 / MAFF 303099) (Mesorhizobium loti (strain MAFF 303099))).